The chain runs to 237 residues: Phosphoribosylaminoimidazole-succinocarboxamide synthase (237 aa).

This sequence belongs to the SAICAR synthetase family.

It carries out the reaction 5-amino-1-(5-phospho-D-ribosyl)imidazole-4-carboxylate + L-aspartate + ATP = (2S)-2-[5-amino-1-(5-phospho-beta-D-ribosyl)imidazole-4-carboxamido]succinate + ADP + phosphate + 2 H(+). The protein operates within purine metabolism; IMP biosynthesis via de novo pathway; 5-amino-1-(5-phospho-D-ribosyl)imidazole-4-carboxamide from 5-amino-1-(5-phospho-D-ribosyl)imidazole-4-carboxylate: step 1/2. The protein is Phosphoribosylaminoimidazole-succinocarboxamide synthase of Methanosarcina acetivorans (strain ATCC 35395 / DSM 2834 / JCM 12185 / C2A).